Consider the following 227-residue polypeptide: E3 ubiquitin-protein ligase RNF186 (227 aa).

The RING-type zinc finger occupies Cys40–Arg86. A run of 2 helical transmembrane segments spans residues His158–Leu178 and Trp180–Pro200.

As to quaternary structure, interacts with BNIP1. In terms of processing, polyubiquitinated. 'Lys-29'-linked autoubiquitination leads to proteasomal degradation.

The protein localises to the endoplasmic reticulum membrane. It catalyses the reaction S-ubiquitinyl-[E2 ubiquitin-conjugating enzyme]-L-cysteine + [acceptor protein]-L-lysine = [E2 ubiquitin-conjugating enzyme]-L-cysteine + N(6)-ubiquitinyl-[acceptor protein]-L-lysine.. The protein operates within protein modification; protein ubiquitination. E3 ubiquitin protein ligase that is part of an apoptotic signaling pathway activated by endoplasmic reticulum stress. Stimulates the expression of proteins specific of the unfolded protein response (UPR), ubiquitinates BNIP1 and regulates its localization to the mitochondrion and induces calcium release from the endoplasmic reticulum that ultimately leads to cell apoptosis. Plays a role in the maintenance of intestinal homeostasis and clearance of enteric pathogens. Upon NOD2 stimulation, ubiquitinates the ER stress sensor activating transcription factor 6/ATF6 and promotes the unfolded protein response UPR. Participates in basal level of autophagy maintenance by regulating the ubiquitination of EPHB2 and EPHB3. Upon stimulation by ligand EFNB1, ubiquitinates EPHB2 and further recruits MAP1LC3B for autophagy induction. Controls nutrient sensing by ubiquitinating Sestrin-2/SESN2, which is an intracellular sensor of cytosolic leucine and inhibitor of mTORC1 activity. The polypeptide is E3 ubiquitin-protein ligase RNF186 (Homo sapiens (Human)).